A 429-amino-acid chain; its full sequence is Proton/sodium-glutamate symport protein (429 aa).

At 1–5 (MKRIK) the chain is on the cytoplasmic side. A helical membrane pass occupies residues 6 to 26 (FGLATQIFVGLILGVIVGVIW). At 27-45 (YGNPALPTYLQPIGDLFLR) the chain is on the extracellular side. Residues 46–66 (LIKMIVIPIVVSSLIIGVAGA) traverse the membrane as a helical segment. The Cytoplasmic segment spans residues 67–79 (GNGKQVGKLGFRT). Residues 80-100 (ILYFEIITTFAIILGLALANI) traverse the membrane as a helical segment. The Extracellular portion of the chain corresponds to 101 to 150 (FHPGTGVNIHEAQKSDISQYVETEKEQSNKSVAETFLHIVPTNFFQSLVE). The helical transmembrane segment at 151 to 171 (GDLLAIICFTVLFALGISAIG) threads the bilayer. Over 172–190 (ERGKPVLAFFEGVSHAMFH) the chain is Cytoplasmic. A helical membrane pass occupies residues 191-211 (VVNLVMKVAPFGVFALIGVTV). Over 212–224 (SKFGLGSLISLGK) the chain is Extracellular. Residues 225 to 245 (LVGLVYVALAFFLIVIFGIVA) traverse the membrane as a helical segment. Lys-246 is a topological domain (cytoplasmic). Residues 247-267 (IAGISIFKFLAYMKDEILLAF) form a helical membrane-spanning segment. Residues 268–290 (STSSSETVLPRIMEKMEKIGCPK) are Extracellular-facing. The chain crosses the membrane as a helical span at residues 291–311 (GIVSFVIPIGYTFNLDGSVLY). The Cytoplasmic portion of the chain corresponds to 312-321 (QSIAALFLAQ). A helical transmembrane segment spans residues 322–342 (VYGIDLTIWHQITLVLVLMVT). Residues 343–353 (SKGMAAVPGTS) are Extracellular-facing. Residues 354–374 (FVVLLATLGTIGVPAEGLAFI) form a helical membrane-spanning segment. Over 375–429 (AGVDRIMDMARTVVNLTGNALAAVVMSKWEGMFNPAKAETVMSQSKTEQNATISG) the chain is Cytoplasmic.

The protein belongs to the dicarboxylate/amino acid:cation symporter (DAACS) (TC 2.A.23) family. In terms of assembly, homotrimer. Interacts with FloT.

It is found in the cell membrane. It localises to the membrane raft. Its function is as follows. This carrier protein is part of the Na(+)-dependent, binding-protein-independent glutamate-aspartate transport system. In Bacillus subtilis (strain 168), this protein is Proton/sodium-glutamate symport protein (gltT).